The chain runs to 131 residues: Runt-related transcription factor 2 (131 aa).

One can recognise a Runt domain in the interval 1–10 (MRVGVPPQIP). Residues 1–75 (MRVGVPPQIP…SSTRGTGLPV (75 aa)) form a disordered region. The residue at position 11 (arginine 11) is an Asymmetric dimethylarginine. Composition is skewed to polar residues over residues 13–36 (SLNS…RQAQ) and 43–70 (YDQS…STRG).

Heterodimer of an alpha and a beta subunit. The alpha subunit binds DNA as a monomer and through the Runt domain. DNA-binding is increased by heterodimerization. Interacts with XRCC6 (Ku70) and XRCC5 (Ku80). Interacts with CCNB1, KAT6A and KAT6B. Interacts with HIVEP3. Interacts with IFI204. Interaction with SATB2; the interaction results in enhanced DNA binding and transactivation by these transcription factors. Binds to HIPK3. Interacts with FOXO1 (via a C-terminal region); the interaction inhibits RUNX2 transcriptional activity towards BGLAP. This interaction is prevented on insulin or IGF1 stimulation as FOXO1 is exported from the nucleus. Interacts with FOXP3. Interacts with TMEM119. Interacts with OLFM2. Interacts with IPO7; the interaction inhibits RUNX2 nuclear translocation in osteoblasts. Post-translationally, phosphorylated; probably by MAP kinases (MAPK). Phosphorylation by HIPK3 is required for the SPEN/MINT and FGF2 transactivation during osteoblastic differentiation.

Its subcellular location is the nucleus. It is found in the cytoplasm. In terms of biological role, transcription factor involved in osteoblastic differentiation and skeletal morphogenesis. Essential for the maturation of osteoblasts and both intramembranous and endochondral ossification. CBF binds to the core site, 5'-PYGPYGGT-3', of a number of enhancers and promoters, including murine leukemia virus, polyomavirus enhancer, T-cell receptor enhancers, osteocalcin, osteopontin, bone sialoprotein, alpha 1(I) collagen, LCK, IL-3 and GM-CSF promoters. Inhibits KAT6B-dependent transcriptional activation. In osteoblasts, supports transcription activation: synergizes with SPEN/MINT to enhance FGFR2-mediated activation of the osteocalcin FGF-responsive element (OCFRE). This chain is Runt-related transcription factor 2 (RUNX2), found in Equus caballus (Horse).